We begin with the raw amino-acid sequence, 311 residues long: Formimidoylglutamase (311 aa).

Mn(2+) contacts are provided by His-130, Asp-155, His-157, Asp-159, Cys-242, and Asp-244.

Belongs to the arginase family. It depends on Mn(2+) as a cofactor.

The enzyme catalyses N-formimidoyl-L-glutamate + H2O = formamide + L-glutamate. It participates in amino-acid degradation; L-histidine degradation into L-glutamate; L-glutamate from N-formimidoyl-L-glutamate (hydrolase route): step 1/1. Catalyzes the conversion of N-formimidoyl-L-glutamate to L-glutamate and formamide. This chain is Formimidoylglutamase, found in Staphylococcus aureus (strain MSSA476).